Consider the following 505-residue polypeptide: RNA-splicing ligase RtcB homolog (505 aa).

Residues D119, C122, H227, H259, and H353 each contribute to the Mn(2+) site. 226–230 (NHYAE) contributes to the GMP binding site. Residues 353–354 (HN), 402–405 (GGSM), S409, 428–431 (HGAG), and K504 contribute to the GMP site. The active-site GMP-histidine intermediate is the H428.

This sequence belongs to the RtcB family. In terms of assembly, catalytic component of the tRNA-splicing ligase complex. The cofactor is Mn(2+).

The protein resides in the nucleus. It is found in the cytoplasm. It catalyses the reaction a 3'-end 3'-phospho-ribonucleotide-RNA + a 5'-end dephospho-ribonucleoside-RNA + GTP = a ribonucleotidyl-ribonucleotide-RNA + GMP + diphosphate. It carries out the reaction a 3'-end 2',3'-cyclophospho-ribonucleotide-RNA + a 5'-end dephospho-ribonucleoside-RNA + GTP + H2O = a ribonucleotidyl-ribonucleotide-RNA + GMP + diphosphate + H(+). Catalytic subunit of the tRNA-splicing ligase complex that acts by directly joining spliced tRNA halves to mature-sized tRNAs. Required for the ligation of mRNAs and specifically, regulates xbp-1 mRNA splicing during the endoplasmic reticulum stress-induced unfolded protein response. Has a neuroprotective role in the age-dependent degeneration of dopamine neurons, which is mediated by xbp-1. This Caenorhabditis elegans protein is RNA-splicing ligase RtcB homolog.